The following is a 331-amino-acid chain: Biotin synthase (331 aa).

The Radical SAM core domain occupies 52-277 (PDVEVEGIIS…RTMLRFAGGR (226 aa)). 3 residues coordinate [4Fe-4S] cluster: cysteine 67, cysteine 71, and cysteine 74. [2Fe-2S] cluster is bound by residues cysteine 110, cysteine 143, cysteine 202, and arginine 272.

It belongs to the radical SAM superfamily. Biotin synthase family. Homodimer. [4Fe-4S] cluster serves as cofactor. Requires [2Fe-2S] cluster as cofactor.

It carries out the reaction (4R,5S)-dethiobiotin + (sulfur carrier)-SH + 2 reduced [2Fe-2S]-[ferredoxin] + 2 S-adenosyl-L-methionine = (sulfur carrier)-H + biotin + 2 5'-deoxyadenosine + 2 L-methionine + 2 oxidized [2Fe-2S]-[ferredoxin]. The protein operates within cofactor biosynthesis; biotin biosynthesis; biotin from 7,8-diaminononanoate: step 2/2. Catalyzes the conversion of dethiobiotin (DTB) to biotin by the insertion of a sulfur atom into dethiobiotin via a radical-based mechanism. The sequence is that of Biotin synthase from Mycolicibacterium gilvum (strain PYR-GCK) (Mycobacterium gilvum (strain PYR-GCK)).